Consider the following 265-residue polypeptide: Glutamate racemase (265 aa).

Residues aspartate 10–serine 11 and tyrosine 42–glycine 43 contribute to the substrate site. Cysteine 73 acts as the Proton donor/acceptor in catalysis. A substrate-binding site is contributed by asparagine 74–threonine 75. Catalysis depends on cysteine 180, which acts as the Proton donor/acceptor. Residue threonine 181–histidine 182 participates in substrate binding.

Belongs to the aspartate/glutamate racemases family.

It carries out the reaction L-glutamate = D-glutamate. The protein operates within cell wall biogenesis; peptidoglycan biosynthesis. Functionally, provides the (R)-glutamate required for cell wall biosynthesis. This chain is Glutamate racemase, found in Synechococcus sp. (strain CC9605).